Here is a 117-residue protein sequence, read N- to C-terminus: Large ribosomal subunit protein uL18 (117 aa).

The protein belongs to the universal ribosomal protein uL18 family. As to quaternary structure, part of the 50S ribosomal subunit; part of the 5S rRNA/L5/L18/L25 subcomplex. Contacts the 5S and 23S rRNAs.

Its function is as follows. This is one of the proteins that bind and probably mediate the attachment of the 5S RNA into the large ribosomal subunit, where it forms part of the central protuberance. This is Large ribosomal subunit protein uL18 from Neisseria gonorrhoeae (strain ATCC 700825 / FA 1090).